A 412-amino-acid polypeptide reads, in one-letter code: Alanyl-tRNA editing protein Aarsd1 (412 aa).

Zn(2+) is bound by residues His-108, His-112, Cys-208, and His-212.

Belongs to the class-II aminoacyl-tRNA synthetase family. Alax-L subfamily. It depends on Zn(2+) as a cofactor.

The protein resides in the cytoplasm. Its function is as follows. Functions in trans to edit the amino acid moiety from incorrectly charged tRNA(Ala). The protein is Alanyl-tRNA editing protein Aarsd1 (aarsd1) of Danio rerio (Zebrafish).